We begin with the raw amino-acid sequence, 303 residues long: Uricase (303 aa).

Alanine 2 bears the N-acetylalanine mark. 2 positions are modified to N6-acetyllysine; alternate: lysine 10 and lysine 23. An N6-succinyllysine; alternate mark is found at lysine 10 and lysine 23. Residue lysine 23 is the Charge relay system of the active site. Lysine 27 and lysine 36 each carry N6-acetyllysine. Residues serine 39 and serine 63 each carry the phosphoserine modification. The active-site Charge relay system is the threonine 68. 2 residues coordinate urate: threonine 68 and aspartate 69. 3 positions are modified to N6-acetyllysine: lysine 118, lysine 122, and lysine 164. Phenylalanine 170 contributes to the urate binding site. Lysine 175 and lysine 185 each carry N6-acetyllysine. Residue arginine 187 participates in urate binding. An N6-acetyllysine; alternate modification is found at lysine 220. N6-succinyllysine; alternate is present on lysine 220. A Phosphoserine modification is found at serine 231. 3 residues coordinate urate: valine 234, glutamine 235, and asparagine 261. Histidine 263 acts as the Charge relay system in catalysis. Lysine 277 is modified (N6-acetyllysine). The residue at position 288 (tyrosine 288) is a Phosphotyrosine. The short motif at 301–303 (SRL) is the Microbody targeting signal element.

This sequence belongs to the uricase family. In terms of tissue distribution, expressed in liver. Not detected in other tissues tested.

The protein resides in the peroxisome. It catalyses the reaction urate + O2 + H2O = 5-hydroxyisourate + H2O2. Its pathway is purine metabolism; urate degradation; (S)-allantoin from urate: step 1/3. With respect to regulation, competitively inhibited by xanthine. Catalyzes the oxidation of uric acid to 5-hydroxyisourate, which is further processed to form (S)-allantoin. The polypeptide is Uricase (Uox) (Rattus norvegicus (Rat)).